A 273-amino-acid polypeptide reads, in one-letter code: Chlorophyll a-b binding protein 8, chloroplastic (273 aa).

Residues 1–32 (MATQALISSSSISTSAEAARQIIGSRISQSVT) constitute a chloroplast transit peptide. N2-acetylarginine is present on Arg-33. Position 56 (Trp-56) interacts with chlorophyll b. Chlorophyll a contacts are provided by Phe-76, Ser-82, and Glu-100. Arg-105 contacts chlorophyll b. The chain crosses the membrane as a helical span at residues 106–126 (FAMLGAAGAIAPEILGKAGLI). Positions 140, 167, and 170 each coordinate chlorophyll b. Residues Lys-224, Glu-225, Asn-228, Arg-230, Gln-242, and His-257 each contribute to the chlorophyll a site. Residues 231-251 (LAMLAILGYFIQALVTGVGPY) traverse the membrane as a helical segment.

Belongs to the light-harvesting chlorophyll a/b-binding (LHC) protein family. In terms of assembly, the LHC complex consists of chlorophyll a-b binding proteins. Requires Binds at least 14 chlorophylls (8 Chl-a and 6 Chl-b) and carotenoids such as lutein and neoxanthin. as cofactor. Post-translationally, photoregulated by reversible phosphorylation of its threonine residues.

Its subcellular location is the plastid. It is found in the chloroplast thylakoid membrane. In terms of biological role, the light-harvesting complex (LHC) functions as a light receptor, it captures and delivers excitation energy to photosystems with which it is closely associated. This is Chlorophyll a-b binding protein 8, chloroplastic (CAB8) from Solanum lycopersicum (Tomato).